A 455-amino-acid chain; its full sequence is GTPase Der (455 aa).

EngA-type G domains lie at 3–167 and 184–359; these read FTIA…PEPA and IRVA…AVWN. GTP contacts are provided by residues 9-16, 56-60, 119-122, 190-197, 237-241, and 302-305; these read GRPNVGKS, DTAGL, NKSE, GRPNAGKS, and NKWD. Residues 360-444 enclose the KH-like domain; it reads RRVATALLNR…PIRITLREKA (85 aa).

Belongs to the TRAFAC class TrmE-Era-EngA-EngB-Septin-like GTPase superfamily. EngA (Der) GTPase family. In terms of assembly, associates with the 50S ribosomal subunit.

GTPase that plays an essential role in the late steps of ribosome biogenesis. This chain is GTPase Der, found in Nitrobacter winogradskyi (strain ATCC 25391 / DSM 10237 / CIP 104748 / NCIMB 11846 / Nb-255).